A 199-amino-acid chain; its full sequence is 3-isopropylmalate dehydratase small subunit (199 aa).

Belongs to the LeuD family. LeuD type 1 subfamily. Heterodimer of LeuC and LeuD.

It catalyses the reaction (2R,3S)-3-isopropylmalate = (2S)-2-isopropylmalate. Its pathway is amino-acid biosynthesis; L-leucine biosynthesis; L-leucine from 3-methyl-2-oxobutanoate: step 2/4. Catalyzes the isomerization between 2-isopropylmalate and 3-isopropylmalate, via the formation of 2-isopropylmaleate. The protein is 3-isopropylmalate dehydratase small subunit of Pseudoalteromonas translucida (strain TAC 125).